A 242-amino-acid chain; its full sequence is Probable transcriptional regulatory protein Cphy_2507 (242 aa).

Belongs to the TACO1 family.

The protein resides in the cytoplasm. The chain is Probable transcriptional regulatory protein Cphy_2507 from Lachnoclostridium phytofermentans (strain ATCC 700394 / DSM 18823 / ISDg) (Clostridium phytofermentans).